Reading from the N-terminus, the 213-residue chain is Probable transaldolase (213 aa).

Catalysis depends on lysine 83, which acts as the Schiff-base intermediate with substrate.

It belongs to the transaldolase family. Type 3B subfamily.

The protein resides in the cytoplasm. It catalyses the reaction D-sedoheptulose 7-phosphate + D-glyceraldehyde 3-phosphate = D-erythrose 4-phosphate + beta-D-fructose 6-phosphate. Its pathway is carbohydrate degradation; pentose phosphate pathway; D-glyceraldehyde 3-phosphate and beta-D-fructose 6-phosphate from D-ribose 5-phosphate and D-xylulose 5-phosphate (non-oxidative stage): step 2/3. In terms of biological role, transaldolase is important for the balance of metabolites in the pentose-phosphate pathway. The sequence is that of Probable transaldolase from Syntrophomonas wolfei subsp. wolfei (strain DSM 2245B / Goettingen).